We begin with the raw amino-acid sequence, 253 residues long: Shikimate dehydrogenase (253 aa).

The Proton acceptor role is filled by Lys63. 115–119 (GAGGA) is a binding site for NADP(+).

The protein belongs to the shikimate dehydrogenase family.

The enzyme catalyses shikimate + NADP(+) = 3-dehydroshikimate + NADPH + H(+). Its pathway is metabolic intermediate biosynthesis; chorismate biosynthesis; chorismate from D-erythrose 4-phosphate and phosphoenolpyruvate: step 4/7. The chain is Shikimate dehydrogenase (aroE) from Thermotoga neapolitana (strain ATCC 49049 / DSM 4359 / NBRC 107923 / NS-E).